We begin with the raw amino-acid sequence, 319 residues long: Tetrahydromethanopterin S-methyltransferase subunit H (319 aa).

This sequence belongs to the MtrH family. In terms of assembly, the complex is composed of 8 subunits; MtrA, MtrB, MtrC, MtrD, MtrE, MtrF, MtrG and MtrH.

The catalysed reaction is 5-methyl-5,6,7,8-tetrahydromethanopterin + coenzyme M + 2 Na(+)(in) = 5,6,7,8-tetrahydromethanopterin + methyl-coenzyme M + 2 Na(+)(out). It participates in one-carbon metabolism; methanogenesis from CO(2); methyl-coenzyme M from 5,10-methylene-5,6,7,8-tetrahydromethanopterin: step 2/2. In terms of biological role, part of a complex that catalyzes the formation of methyl-coenzyme M and tetrahydromethanopterin from coenzyme M and methyl-tetrahydromethanopterin. This is an energy-conserving, sodium-ion translocating step. MtrH catalyzes the transfer of the methyl group from methyl-tetrahydromethanopterin to the corrinoid prosthetic group of MtrA. The polypeptide is Tetrahydromethanopterin S-methyltransferase subunit H (Methanococcus maripaludis (strain DSM 14266 / JCM 13030 / NBRC 101832 / S2 / LL)).